The primary structure comprises 235 residues: Sugar fermentation stimulation protein homolog (235 aa).

The protein belongs to the SfsA family.

In Ectopseudomonas mendocina (strain ymp) (Pseudomonas mendocina), this protein is Sugar fermentation stimulation protein homolog.